Consider the following 308-residue polypeptide: MLTDRVLATKEALVVALGDNWERYRANMKNWFRSRWTKEEFDAESRKILTPDKLHLHNQFLLALLNKIDAFAPLENPPAVQTSSSSGNRSKRRKRSCRTFAERLNFELSDVLDFVAEDNMQIIRPPTTIGIPSDQQQQQLQSQRYCAQELFLPDAGFIMGRFLIGAWEIGLVSVDDNVAEYVAMAVQVLLKDLLSAIIKKRKHYKTSGEGNFYYDVGAPLRDPSLRNTVTRQKVDDTPLELDKELNTANFMRRQNDDVTFLSACEEVQPTERTVITLKDCQLALRDRNLIGSHAVYSINMERLNMMMH.

This sequence belongs to the TADA1 family. In terms of assembly, component of the Spt-Ada-Gcn5 acetyltransferase (SAGA) complex consisting of wda/Taf5L, Saf6, Taf9, Taf10b, Taf12, Ada1, Spt3, Spt7, Spt20, Sf3b3, Sf3b5, Nipped-A/Tra1, a histone acetyltransferase (HAT) module made up of Gcn5, Ada2b (Isoform B), Ada3 and Sgf29, and a deubiquitinase (DUB) module made up of not/nonstop, Sgf11 and e(y)2 tethered to SAGA by Atxn7. Not a component of the Ada2a-containing ATAC complex.

The protein localises to the nucleus. Functionally, component of the transcription regulatory complex SAGA, a multiprotein complex that activates transcription by remodeling chromatin and mediating histone acetylation and deubiquitination. The SAGA complex predominantly acetylates histone H3. This Drosophila melanogaster (Fruit fly) protein is Transcriptional adapter 1-1.